The chain runs to 401 residues: Riboflavin biosynthesis protein RibBA (401 aa).

A DHBP synthase region spans residues 1 to 203; that stretch reads MTDFQFSKVE…IQQLQEYRRK (203 aa). Residues 30 to 31, aspartate 35, 142 to 146, and glutamate 166 contribute to the D-ribulose 5-phosphate site; these read RE and RNGHT. Residue glutamate 31 participates in Mg(2+) binding. Residue histidine 145 participates in Mg(2+) binding. The segment at 204–401 is GTP cyclohydrolase II; the sequence is HDSLVKQISV…QIKMGHMFNF (198 aa). 254-258 contacts GTP; the sequence is RIHSE. Residues cysteine 259, cysteine 270, and cysteine 272 each coordinate Zn(2+). Residues glutamine 275, 297–299, and threonine 319 contribute to the GTP site; that span reads EGR. Aspartate 331 serves as the catalytic Proton acceptor; for GTP cyclohydrolase activity. The active-site Nucleophile; for GTP cyclohydrolase activity is the arginine 333. Positions 354 and 359 each coordinate GTP.

The protein in the N-terminal section; belongs to the DHBP synthase family. This sequence in the C-terminal section; belongs to the GTP cyclohydrolase II family. Mg(2+) is required as a cofactor. Requires Mn(2+) as cofactor. It depends on Zn(2+) as a cofactor.

The enzyme catalyses D-ribulose 5-phosphate = (2S)-2-hydroxy-3-oxobutyl phosphate + formate + H(+). The catalysed reaction is GTP + 4 H2O = 2,5-diamino-6-hydroxy-4-(5-phosphoribosylamino)-pyrimidine + formate + 2 phosphate + 3 H(+). Its pathway is cofactor biosynthesis; riboflavin biosynthesis; 2-hydroxy-3-oxobutyl phosphate from D-ribulose 5-phosphate: step 1/1. The protein operates within cofactor biosynthesis; riboflavin biosynthesis; 5-amino-6-(D-ribitylamino)uracil from GTP: step 1/4. In terms of biological role, catalyzes the conversion of D-ribulose 5-phosphate to formate and 3,4-dihydroxy-2-butanone 4-phosphate. Functionally, catalyzes the conversion of GTP to 2,5-diamino-6-ribosylamino-4(3H)-pyrimidinone 5'-phosphate (DARP), formate and pyrophosphate. In Actinobacillus pleuropneumoniae serotype 5b (strain L20), this protein is Riboflavin biosynthesis protein RibBA.